The following is a 443-amino-acid chain: Palmitoyltransferase pfa5 (443 aa).

2 helical membrane passes run 17 to 37 (IIPPILIGVFGYASYAITKPL) and 57 to 77 (AGAAILAIYYVLLIPVLATYL). The interval 96–137 (CTQNQTGSDGSKHRHRRHRRRKSGHHLSKTTEKTDRSDGGDV) is disordered. Residues 107-123 (KHRHRRHRRRKSGHHLS) show a composition bias toward basic residues. The segment covering 124–137 (KTTEKTDRSDGGDV) has biased composition (basic and acidic residues). One can recognise a DHHC domain in the interval 175–225 (VYCSTCCQFKTDRAHHCREVDRCVRKMDHFCPWVGGVVSETSFKFFIQFIV). 2 consecutive transmembrane segments (helical) span residues 220–240 (FIQFIVYTMIYCIFVLIVFAI) and 256–276 (WIVCLALSSLFGFFTFGVAIS). Positions 410–443 (AGLEVSTESESADPVGAAETPQHEQRRGKHRRRN) are disordered.

The protein belongs to the DHHC palmitoyltransferase family. PFA5 subfamily. Autopalmitoylated.

It localises to the membrane. It carries out the reaction L-cysteinyl-[protein] + hexadecanoyl-CoA = S-hexadecanoyl-L-cysteinyl-[protein] + CoA. In Aspergillus fumigatus (strain ATCC MYA-4609 / CBS 101355 / FGSC A1100 / Af293) (Neosartorya fumigata), this protein is Palmitoyltransferase pfa5 (pfa5).